The sequence spans 142 residues: Group IIE secretory phospholipase A2 (142 aa).

Residues Met-1 to Gly-19 form the signal peptide. Ca(2+) is bound by residues Asp-41, Gly-43, Tyr-45, Gly-47, and Gly-49. 7 disulfides stabilise this stretch: Cys-44–Cys-135, Cys-46–Cys-62, Cys-61–Cys-115, Cys-67–Cys-142, Cys-68–Cys-108, Cys-77–Cys-101, and Cys-95–Cys-106. Residue His-65 is part of the active site. Residue Asp-66 coordinates Ca(2+). The active site involves Asp-109. Ca(2+) is bound by residues Tyr-130 and Asn-132.

Belongs to the phospholipase A2 family. It depends on Ca(2+) as a cofactor. As to expression, restricted to the brain, heart, lung, and placenta.

Its subcellular location is the secreted. The protein localises to the cytoplasm. It catalyses the reaction a 1,2-diacyl-sn-glycero-3-phosphoethanolamine + H2O = a 1-acyl-sn-glycero-3-phosphoethanolamine + a fatty acid + H(+). It carries out the reaction 1-hexadecanoyl-2-(9Z-octadecenoyl)-sn-glycero-3-phosphoethanolamine + H2O = 1-hexadecanoyl-sn-glycero-3-phosphoethanolamine + (9Z)-octadecenoate + H(+). The enzyme catalyses 1-hexadecanoyl-2-(9Z,12Z-octadecadienoyl)-sn-glycero-3-phosphoethanolamine + H2O = 1-hexadecanoyl-sn-glycero-3-phosphoethanolamine + (9Z,12Z)-octadecadienoate + H(+). The catalysed reaction is 1-hexadecanoyl-2-(5Z,8Z,11Z,14Z-eicosatetraenoyl)-sn-glycero-3-phosphoethanolamine + H2O = 1-hexadecanoyl-sn-glycero-3-phosphoethanolamine + (5Z,8Z,11Z,14Z)-eicosatetraenoate + H(+). It catalyses the reaction 1,2-dihexadecanoyl-sn-glycero-3-phospho-(1'-sn-glycerol) + H2O = 1-hexadecanoyl-sn-glycero-3-phospho-(1'-sn-glycerol) + hexadecanoate + H(+). It carries out the reaction 1-hexadecanoyl-2-(9Z-octadecenoyl)-sn-glycero-3-phosphoglycerol + H2O = 1-hexadecanoyl-sn-glycero-3-phosphoglycerol + (9Z)-octadecenoate + H(+). The enzyme catalyses a 1,2-diacyl-sn-glycero-3-phosphocholine + H2O = a 1-acyl-sn-glycero-3-phosphocholine + a fatty acid + H(+). The catalysed reaction is 1,2-dihexadecanoyl-sn-glycero-3-phosphocholine + H2O = 1-hexadecanoyl-sn-glycero-3-phosphocholine + hexadecanoate + H(+). It catalyses the reaction 1-hexadecanoyl-2-(9Z-octadecenoyl)-sn-glycero-3-phosphocholine + H2O = 1-hexadecanoyl-sn-glycero-3-phosphocholine + (9Z)-octadecenoate + H(+). It carries out the reaction 1-hexadecanoyl-2-(9Z,12Z-octadecadienoyl)-sn-glycero-3-phosphocholine + H2O = (9Z,12Z)-octadecadienoate + 1-hexadecanoyl-sn-glycero-3-phosphocholine + H(+). The enzyme catalyses 1-hexadecanoyl-2-(4Z,7Z,10Z,13Z,16Z,19Z-docosahexaenoyl)-sn-glycero-3-phosphocholine + H2O = (4Z,7Z,10Z,13Z,16Z,19Z)-docosahexaenoate + 1-hexadecanoyl-sn-glycero-3-phosphocholine + H(+). Secretory calcium-dependent phospholipase A2 that primarily targets extracellular phospholipids. Hydrolyzes the ester bond of the fatty acyl group attached at sn-2 position of phospholipids (phospholipase A2 activity), releasing various unsaturated fatty acids including oleoate, linoleoate, arachidonate, docosahexaenoate and lysophosphatidylethanolamines in preference to lysophosphatidylcholines. In response to high-fat diet, hydrolyzes minor lipoprotein phospholipids including phosphatidylserines, phosphatidylinositols and phosphatidylglycerols, altering lipoprotein composition and fat storage in adipose tissue and liver. May act in an autocrine and paracrine manner. Contributes to lipid remodeling of cellular membranes and generation of lipid mediators involved in pathogen clearance. Cleaves sn-2 fatty acyl chains of phosphatidylglycerols and phosphatidylethanolamines, which are major components of membrane phospholipids in bacteria. Acts as a hair follicle phospholipase A2. Selectively releases lysophosphatidylethanolamines (LPE) and various unsaturated fatty acids in skin to regulate hair follicle homeostasis. May regulate the inflammatory response by releasing arachidonate, a precursor of prostaglandins and leukotrienes. Upon allergen exposure, may participate in allergic inflammatory response by enhancing leukotriene C4 synthesis and degranulation in mast cells. The polypeptide is Group IIE secretory phospholipase A2 (PLA2G2E) (Homo sapiens (Human)).